We begin with the raw amino-acid sequence, 342 residues long: Probable allantoicase (342 aa).

Belongs to the allantoicase family.

It catalyses the reaction allantoate + H2O = (S)-ureidoglycolate + urea. Its pathway is nitrogen metabolism; (S)-allantoin degradation; (S)-ureidoglycolate from allantoate (aminidohydrolase route): step 1/1. In terms of biological role, utilization of purines as secondary nitrogen sources, when primary sources are limiting. The protein is Probable allantoicase of Schizosaccharomyces pombe (strain 972 / ATCC 24843) (Fission yeast).